Here is a 108-residue protein sequence, read N- to C-terminus: Class I hydrophobin eas (108 aa).

The first 26 residues, 1–26 (MQFTSVFTILAIAMTAAAAPAEVVPR), serve as a signal peptide directing secretion. Intrachain disulfides connect Cys-35–Cys-86, Cys-44–Cys-80, Cys-45–Cys-71, and Cys-87–Cys-106.

It belongs to the fungal hydrophobin family. Self-assembles to form functional amyloid fibrils called rodlets. Self-assembly into fibrillar rodlets occurs spontaneously at hydrophobic:hydrophilic interfaces and the rodlets further associate laterally to form amphipathic monolayers.

The protein localises to the secreted. It is found in the spore wall. In terms of biological role, aerial growth, conidiation, and dispersal of filamentous fungi in the environment rely upon a capability of their secreting small amphipathic proteins called hydrophobins (HPBs) with low sequence identity. Class I can self-assemble into an outermost layer of rodlet bundles on aerial cell surfaces, conferring cellular hydrophobicity that supports fungal growth, development and dispersal; whereas class II form highly ordered films at water-air interfaces through intermolecular interactions but contribute nothing to the rodlet structure. Eas is a class I hydrophobin that forms functional amyloid fibrils called rodlets that facilitate spore formation and dispersal. The polypeptide is Class I hydrophobin eas (Neurospora crassa (strain ATCC 24698 / 74-OR23-1A / CBS 708.71 / DSM 1257 / FGSC 987)).